Here is a 473-residue protein sequence, read N- to C-terminus: Photosystem II CP43 reaction center protein (473 aa).

Positions 1–14 (MKTLYSLRRFYPVE) are excised as a propeptide. The residue at position 15 (Thr15) is an N-acetylthreonine. A Phosphothreonine modification is found at Thr15. 5 helical membrane-spanning segments follow: residues 69-93 (LFEV…PHLA), 134-155 (LIGP…KDRS), 178-200 (KALY…RKIT), 255-275 (KPFA…LSYS), and 291-312 (WFNN…ASQA). Glu367 serves as a coordination point for [CaMn4O5] cluster. Residues 447-471 (RARAAAAGFEKGIDRDFEPVLSMNP) form a helical membrane-spanning segment.

It belongs to the PsbB/PsbC family. PsbC subfamily. As to quaternary structure, PSII is composed of 1 copy each of membrane proteins PsbA, PsbB, PsbC, PsbD, PsbE, PsbF, PsbH, PsbI, PsbJ, PsbK, PsbL, PsbM, PsbT, PsbX, PsbY, PsbZ, Psb30/Ycf12, at least 3 peripheral proteins of the oxygen-evolving complex and a large number of cofactors. It forms dimeric complexes. The cofactor is Binds multiple chlorophylls and provides some of the ligands for the Ca-4Mn-5O cluster of the oxygen-evolving complex. It may also provide a ligand for a Cl- that is required for oxygen evolution. PSII binds additional chlorophylls, carotenoids and specific lipids..

It localises to the plastid. Its subcellular location is the chloroplast thylakoid membrane. Its function is as follows. One of the components of the core complex of photosystem II (PSII). It binds chlorophyll and helps catalyze the primary light-induced photochemical processes of PSII. PSII is a light-driven water:plastoquinone oxidoreductase, using light energy to abstract electrons from H(2)O, generating O(2) and a proton gradient subsequently used for ATP formation. The polypeptide is Photosystem II CP43 reaction center protein (Cycas taitungensis (Prince sago)).